A 307-amino-acid chain; its full sequence is DDRGK domain-containing protein 1 (307 aa).

Residues 1–2 (MD) are Lumenal-facing. The helical transmembrane segment at 3–23 (LILLVGIATALLLILITLYFL) threads the bilayer. At 24–307 (QSKNAKTETK…TPVAAGESSA (284 aa)) the chain is on the cytoplasmic side. The disordered stretch occupies residues 31-175 (ETKAAAQPQR…EADRLAKEER (145 aa)). Residues 52–83 (RRAQIARNQRNRLRQNQNAPAVAAAAAPAAAV) are compositionally biased toward low complexity. The segment covering 107-175 (LDEKMGAKKR…EADRLAKEER (69 aa)) has biased composition (basic and acidic residues).

It belongs to the DDRGK1 family. In terms of assembly, interacts with Atg9; the interaction is transient.

The protein resides in the endoplasmic reticulum membrane. Substrate adapter for ufmylation, the covalent attachment of the ubiquitin-like modifier UFM1 to substrate proteins. Required for ufmylation of Atg9; protects the nervous system during aging, possibly by stabilizing Atg9 and supporting its function. The protein is DDRGK domain-containing protein 1 of Drosophila virilis (Fruit fly).